A 134-amino-acid chain; its full sequence is Cytochrome b5 isoform B (134 aa).

The 77-residue stretch at 5–81 folds into the Cytochrome b5 heme-binding domain; the sequence is AKIFTLSEVS…MEQYYVGEID (77 aa). Residues histidine 40 and histidine 64 each contribute to the heme site. Residues 107-127 form a helical membrane-spanning segment; it reads FIIKLLQFLVPLAILGLAVGI.

It belongs to the cytochrome b5 family. As to quaternary structure, interacts with CER1, FAH1, FAH2 and BI-1.

It is found in the endoplasmic reticulum membrane. Functionally, membrane bound hemoprotein which function as an electron carrier for several membrane bound oxygenases, including fatty acid desaturases. In Arabidopsis thaliana (Mouse-ear cress), this protein is Cytochrome b5 isoform B.